A 158-amino-acid chain; its full sequence is MSRRRRAVKREILPDPKFGDIVITRFMNALMYDGKKSVAEGIVYGALDVLKKRGGNQADPVRMFHEALDNVKPAVEVRSRRVGGATYQVPVEVRADRRQALAIRWIIDASRKRGEHTMEERLSNELLDAVHNRGSAVKKREDTHRMAEANKAFSHYRW.

Belongs to the universal ribosomal protein uS7 family. Part of the 30S ribosomal subunit. Contacts proteins S9 and S11.

Its function is as follows. One of the primary rRNA binding proteins, it binds directly to 16S rRNA where it nucleates assembly of the head domain of the 30S subunit. Is located at the subunit interface close to the decoding center, probably blocks exit of the E-site tRNA. This chain is Small ribosomal subunit protein uS7, found in Granulibacter bethesdensis (strain ATCC BAA-1260 / CGDNIH1).